Reading from the N-terminus, the 143-residue chain is MSLTAKDKTLVKTFWGKVKGKADAMGAEALGRMLVVYPQTKTYFAHWSDQSPGSEPVKHGKKTIMGAVGDAVGKIDNLLGGLSALSEVHATKLAIDPGNFKLLSHCLLVTFAVNYPTDFTAEVHVAVDKFLAAVSAALADKYR.

The residue at position 2 (Ser-2) is an N-acetylserine. The Globin domain maps to 2–143 (SLTAKDKTLV…VSAALADKYR (142 aa)). O2 is bound at residue His-59. A heme b-binding site is contributed by His-89.

Belongs to the globin family. In terms of assembly, heterotetramer of two alpha chains and two beta chains. Red blood cells.

Its function is as follows. Involved in oxygen transport from the gills to the various peripheral tissues. The sequence is that of Hemoglobin cathodic subunit alpha from Conger conger (Conger eel).